The primary structure comprises 210 residues: RNA chaperone ProQ (210 aa).

Positions 98–127 (HAKASLEESKAKVAARRKEQAKKAREEAKA) are enriched in basic and acidic residues. The segment at 98–155 (HAKASLEESKAKVAARRKEQAKKAREEAKAKKPARATTPPKRRPQPAAVAKKQEKPVE) is disordered.

This sequence belongs to the ProQ family.

Its subcellular location is the cytoplasm. Its function is as follows. RNA chaperone with significant RNA binding, RNA strand exchange and RNA duplexing activities. In Aliivibrio salmonicida (strain LFI1238) (Vibrio salmonicida (strain LFI1238)), this protein is RNA chaperone ProQ.